The primary structure comprises 437 residues: GTPase Obg (437 aa).

One can recognise an Obg domain in the interval 2–160; the sequence is SMFLDTAKIS…RQLELELKIL (159 aa). An OBG-type G domain is found at 161-338; sequence ADVGLVGFPS…LLEATAELLA (178 aa). GTP-binding positions include 167 to 174, 192 to 196, 214 to 217, 284 to 287, and 319 to 321; these read GFPSVGKS, FTTIV, DLPG, NKMD, and SSL. Mg(2+) is bound by residues S174 and T194. The 79-residue stretch at 359-437 folds into the OCT domain; it reads GFAEAEKEFE…IGKFEFEFVD (79 aa).

This sequence belongs to the TRAFAC class OBG-HflX-like GTPase superfamily. OBG GTPase family. Monomer. Mg(2+) serves as cofactor.

The protein resides in the cytoplasm. An essential GTPase which binds GTP, GDP and possibly (p)ppGpp with moderate affinity, with high nucleotide exchange rates and a fairly low GTP hydrolysis rate. Plays a role in control of the cell cycle, stress response, ribosome biogenesis and in those bacteria that undergo differentiation, in morphogenesis control. This Streptococcus pyogenes serotype M3 (strain ATCC BAA-595 / MGAS315) protein is GTPase Obg.